Reading from the N-terminus, the 876-residue chain is Alanine--tRNA ligase (876 aa).

K74 is modified (N6-acetyllysine). Positions 564, 568, 666, and 670 each coordinate Zn(2+).

It belongs to the class-II aminoacyl-tRNA synthetase family. Homotetramer. Requires Zn(2+) as cofactor.

It is found in the cytoplasm. The enzyme catalyses tRNA(Ala) + L-alanine + ATP = L-alanyl-tRNA(Ala) + AMP + diphosphate. Functionally, catalyzes the attachment of alanine to tRNA(Ala) in a two-step reaction: alanine is first activated by ATP to form Ala-AMP and then transferred to the acceptor end of tRNA(Ala). Also edits incorrectly charged Ser-tRNA(Ala) and Gly-tRNA(Ala) via its editing domain. This chain is Alanine--tRNA ligase, found in Escherichia coli O9:H4 (strain HS).